The chain runs to 808 residues: N-terminal kinase-like protein (808 aa).

The Protein kinase domain occupies 14–314; it reads FELIPEPPEG…PEDFCRHKVL (301 aa). 3 HEAT repeats span residues 350–388, 389–427, and 507–545; these read IIPVVVKMFSSTDRAMRIRLLQQMEQFIQYLDEPTVNTQ, IFPHVVHGFLDTNPAIREQTVKSMLLLAPKLNEANLNVE, and ILPVLCGLTVDPEKSVRDQAFKAIRSFLSKLESVSEDPT. 3 disordered regions span residues 540-566, 587-646, and 658-808; these read VSEDPTQLEEVEKDVHAASSPGMGGAA, SHPT…RWDD, and SVLA…RKLD. Low complexity predominate over residues 556–566; sequence AASSPGMGGAA. Over residues 587–600 the composition is skewed to polar residues; it reads SHPTTAPTETNIPQ. Positions 601 to 617 are enriched in pro residues; sequence RPTPEGVPAPAPTPVPA. The segment covering 660–680 has biased composition (polar residues); that stretch reads LAQQDDWSTGGQVSRASQVSN. Residues 681–690 are compositionally biased toward basic and acidic residues; that stretch reads SDHKSSKSPE. Position 754 is a phosphoserine (S754). Residues 755-764 are compositionally biased toward acidic residues; it reads WGEDNWEGLE. Residues 761–797 adopt a coiled-coil conformation; the sequence is EGLETDSRQVKAELARKKREERRREMEAKRAERKVAK. Basic and acidic residues-rich tracts occupy residues 765–775 and 782–795; these read TDSRQVKAELA and RRREMEAKRAERKV. Residues 793–808 are interaction with COPB1; the sequence is RKVAKGPMKLGARKLD.

Belongs to the protein kinase superfamily. As to quaternary structure, interacts with GORAB. Interacts with COPA, COPB1 and COPB2. Homooligomer. Interacts with AP2B1. As to expression, ubiquitous.

It is found in the cytoplasm. The protein localises to the cytoskeleton. It localises to the microtubule organizing center. The protein resides in the centrosome. Its subcellular location is the endoplasmic reticulum-Golgi intermediate compartment. It is found in the golgi apparatus. The protein localises to the cis-Golgi network. It localises to the nucleus. Regulates COPI-mediated retrograde protein traffic at the interface between the Golgi apparatus and the endoplasmic reticulum. Involved in the maintenance of the Golgi apparatus morphology. Functionally, acts as a transcriptional activator. It binds to three different types of GC-rich DNA binding sites (box-A, -B and -C) in the beta-polymerase promoter region. It also binds to the TERT promoter region. The chain is N-terminal kinase-like protein (SCYL1) from Homo sapiens (Human).